Here is a 523-residue protein sequence, read N- to C-terminus: Rho guanine nucleotide exchange factor 8 (523 aa).

The span at Val44–Phe57 shows a compositional bias: polar residues. Disordered stretches follow at residues Val44–Gln83 and Glu442–His523. Positions Gly76–Ala440 constitute a PRONE domain. Residues Glu465 to Thr475 are compositionally biased toward basic and acidic residues.

In terms of assembly, homodimer. The homodimer interacts with ARAC5/ROP4. Interacts with ARAC11/ROP1 and ARAC10/ROP11. Interacts with PRK6. In terms of tissue distribution, expressed in pollen grains and pollen tubes.

The protein localises to the cell membrane. Functionally, guanine-nucleotide exchange factor (GEF) that acts as an activator of Rop (Rho of plants) GTPases by promoting the exchange of GDP for GTP. Active as homodimer. This chain is Rho guanine nucleotide exchange factor 8, found in Arabidopsis thaliana (Mouse-ear cress).